The sequence spans 488 residues: Ribulose bisphosphate carboxylase large chain (488 aa).

2 residues coordinate substrate: Asn127 and Thr177. The active-site Proton acceptor is the Lys179. A substrate-binding site is contributed by Lys181. Mg(2+) is bound by residues Lys205, Asp207, and Glu208. Lys205 carries the post-translational modification N6-carboxylysine. The active-site Proton acceptor is His297. Substrate-binding residues include Arg298, His330, and Ser382.

This sequence belongs to the RuBisCO large chain family. Type I subfamily. Heterohexadecamer of 8 large chains and 8 small chains. Requires Mg(2+) as cofactor.

It localises to the plastid. It is found in the chloroplast. The catalysed reaction is 2 (2R)-3-phosphoglycerate + 2 H(+) = D-ribulose 1,5-bisphosphate + CO2 + H2O. It catalyses the reaction D-ribulose 1,5-bisphosphate + O2 = 2-phosphoglycolate + (2R)-3-phosphoglycerate + 2 H(+). Functionally, ruBisCO catalyzes two reactions: the carboxylation of D-ribulose 1,5-bisphosphate, the primary event in carbon dioxide fixation, as well as the oxidative fragmentation of the pentose substrate in the photorespiration process. Both reactions occur simultaneously and in competition at the same active site. The polypeptide is Ribulose bisphosphate carboxylase large chain (Cyanidium caldarium (Red alga)).